The sequence spans 305 residues: MVDKLTHLKQLEAESIHIIREVAAEFGNPVMLYSIGKDSAVMLHLARKAFFPGKLPFPVLHVDTRWKFQEMYRFREKMVSEMGLDLITHINPDGVAQDMNPFTYGSAKHTDVMKTEGLKQALDKYGFDAAFGGARRDEEKSRAKERVYSFRDSKHRWDPKNQRPELWNLYNGKVKKGESIRVFPLSNWTELDIWQYIYLEQIPIVPLYFAAEREVVELNGTLVMIDDERILSYLTPEQKASIHKKMVRFRTLGCYPLTGAVESTATTLPEIIQEMLLTRTSERQGRVIDHDATGSMEEKKRQGYF.

Belongs to the PAPS reductase family. CysD subfamily. In terms of assembly, heterodimer composed of CysD, the smaller subunit, and CysN.

It catalyses the reaction sulfate + ATP + H(+) = adenosine 5'-phosphosulfate + diphosphate. Its pathway is sulfur metabolism; hydrogen sulfide biosynthesis; sulfite from sulfate: step 1/3. With CysN forms the ATP sulfurylase (ATPS) that catalyzes the adenylation of sulfate producing adenosine 5'-phosphosulfate (APS) and diphosphate, the first enzymatic step in sulfur assimilation pathway. APS synthesis involves the formation of a high-energy phosphoric-sulfuric acid anhydride bond driven by GTP hydrolysis by CysN coupled to ATP hydrolysis by CysD. The chain is Sulfate adenylyltransferase subunit 2 from Stutzerimonas stutzeri (strain A1501) (Pseudomonas stutzeri).